The chain runs to 358 residues: U5 small nuclear ribonucleoprotein 40 kDa protein (358 aa).

Lys-18 participates in a covalent cross-link: Glycyl lysine isopeptide (Lys-Gly) (interchain with G-Cter in SUMO2). Arg-21 is subject to Asymmetric dimethylarginine. WD repeat units lie at residues 65–104 (GHEG…DNYA), 108–147 (GHSG…RVKR), 150–190 (GHTS…AIQT), 192–231 (QNTY…LTYT), 234–273 (GHAD…PKER), 284–323 (NFEK…ILYK), and 326–358 (GHAG…GEIQ). A Glycyl lysine isopeptide (Lys-Gly) (interchain with G-Cter in SUMO2) cross-link involves residue Lys-271.

In terms of assembly, component of the pre-catalytic and catalytic spliceosome complexes. Component of the postcatalytic spliceosome P complex. Part of the U5 snRNP complex. Interacts with PRPF8. Component of the U4/U6-U5 tri-snRNP complex composed of the U4, U6 and U5 snRNAs and at least PRPF3, PRPF4, PRPF6, PRPF8, PRPF31, SNRNP200, TXNL4A, WDR57, SNRNP40, DDX23, CD2BP2, PPIH, SNU13, EFTUD2, SART1 and USP39. Component of the minor spliceosome, which splices U12-type introns.

It localises to the nucleus. Required for pre-mRNA splicing as component of the activated spliceosome. Component of the U5 small nuclear ribonucleoprotein (snRNP) complex and the U4/U6-U5 tri-snRNP complex, building blocks of the spliceosome. As a component of the minor spliceosome, involved in the splicing of U12-type introns in pre-mRNAs. The polypeptide is U5 small nuclear ribonucleoprotein 40 kDa protein (SNRNP40) (Bos taurus (Bovine)).